The primary structure comprises 168 residues: DAZ-associated protein 2 (168 aa).

A compositionally biased stretch (low complexity) spans 1-13; the sequence is MNSKGQYPTQPTY. The interval 1–25 is disordered; it reads MNSKGQYPTQPTYPVQPPGNPVYPQ. The short motif at 39-42 is the PPAY element; the sequence is PPAY. At S77 the chain carries Phosphoserine.

Interacts with SOX6. Interacts with DAZ1 and DAZL. Interacts with IL17RB. May interact with FAM168B. Interacts with INCA1. Interacts with EIF4G1 and EIF4G2. Interacts (via PPAY motif) with NEDD4 (via WW domains). Interacts with transcription factor TCF4; the interaction results in localization of DAZAP2 to the nucleus. Interacts with transcription factors TCF7 and TCF7L1. Interacts with transcription factor LEF1. Interacts with serine/threonine-protein kinase HIPK2; the interaction results in phosphorylation of DAZAP2 which causes localization of DAZAP2 to the nucleus, reduces interaction of DAZAP2 with HIPK2 and prevents DAZAP2-dependent degradation of HIPK2. Interacts with ubiquitin ligase SIAH1; the interaction is decreased following phosphorylation of DAZAP2 by HIPK2. Interacts with TP53; the interaction is triggered by DNA damage. In terms of processing, ubiquitinated by SMURF2, leading to proteasomal degradation. Ubiquitinated by NEDD4, leading to proteasomal degradation. Post-translationally, following DNA damage, phosphorylated by HIPK2 which promotes DAZAP2 localization to the nucleus, reduces interaction of DAZAP2 with HIPK2 and SIAH1, and prevents DAZAP2-dependent ubiquitination of HIPK2 by E3 ubiquitin-protein ligase SIAH1 and subsequent HIPK2 proteasomal degradation. Widely expressed. Highly expressed in brain.

The protein localises to the cytoplasm. The protein resides in the nucleus. It localises to the nucleus speckle. Its subcellular location is the nuclear body. It is found in the stress granule. In unstressed cells, promotes SIAH1-mediated polyubiquitination and degradation of the serine/threonine-protein kinase HIPK2, probably by acting as a loading factor that potentiates complex formation between HIPK2 and ubiquitin ligase SIAH1. In response to DNA damage, localizes to the nucleus following phosphorylation by HIPK2 and modulates the expression of a subset of TP53/p53 target genes by binding to TP53 at target gene promoters. This limits the expression of a number of cell death-mediating TP53 target genes, reducing DNA damage-induced cell death. Enhances the binding of transcription factor TCF7L2/TCF4, a Wnt signaling pathway effector, to the promoters of target genes. Plays a role in stress granule formation. The chain is DAZ-associated protein 2 (Dazap2) from Mus musculus (Mouse).